Consider the following 502-residue polypeptide: UDP-N-acetylmuramoylalanine--D-glutamate ligase (502 aa).

Glycine 129–threonine 135 is an ATP binding site. The disordered stretch occupies residues alanine 288 to isoleucine 307.

It belongs to the MurCDEF family.

The protein resides in the cytoplasm. It carries out the reaction UDP-N-acetyl-alpha-D-muramoyl-L-alanine + D-glutamate + ATP = UDP-N-acetyl-alpha-D-muramoyl-L-alanyl-D-glutamate + ADP + phosphate + H(+). It functions in the pathway cell wall biogenesis; peptidoglycan biosynthesis. In terms of biological role, cell wall formation. Catalyzes the addition of glutamate to the nucleotide precursor UDP-N-acetylmuramoyl-L-alanine (UMA). The polypeptide is UDP-N-acetylmuramoylalanine--D-glutamate ligase (Burkholderia ambifaria (strain ATCC BAA-244 / DSM 16087 / CCUG 44356 / LMG 19182 / AMMD) (Burkholderia cepacia (strain AMMD))).